The sequence spans 197 residues: Putative AgrB-like protein (197 aa).

Transmembrane regions (helical) follow at residues phenylalanine 29 to leucine 49, serine 79 to alanine 99, tyrosine 102 to tyrosine 122, and isoleucine 143 to glycine 163.

Belongs to the AgrB family.

Its subcellular location is the cell membrane. May be involved in the proteolytic processing of a quorum sensing system signal molecule precursor. The polypeptide is Putative AgrB-like protein (Halalkalibacterium halodurans (strain ATCC BAA-125 / DSM 18197 / FERM 7344 / JCM 9153 / C-125) (Bacillus halodurans)).